Reading from the N-terminus, the 437-residue chain is Glutamyl-tRNA reductase (437 aa).

Residues T46–R49, S111, E116–E118, and Q122 contribute to the substrate site. C47 (nucleophile) is an active-site residue. G192–A197 contributes to the NADP(+) binding site. The disordered stretch occupies residues P413–G437. Over residues D426–G437 the composition is skewed to basic and acidic residues.

It belongs to the glutamyl-tRNA reductase family. As to quaternary structure, homodimer.

The enzyme catalyses (S)-4-amino-5-oxopentanoate + tRNA(Glu) + NADP(+) = L-glutamyl-tRNA(Glu) + NADPH + H(+). Its pathway is porphyrin-containing compound metabolism; protoporphyrin-IX biosynthesis; 5-aminolevulinate from L-glutamyl-tRNA(Glu): step 1/2. Functionally, catalyzes the NADPH-dependent reduction of glutamyl-tRNA(Glu) to glutamate 1-semialdehyde (GSA). The polypeptide is Glutamyl-tRNA reductase (Kocuria rhizophila (strain ATCC 9341 / DSM 348 / NBRC 103217 / DC2201)).